The primary structure comprises 221 residues: MKPAPTTQQELLTRAQQIAGLSFAELADEAGMTVPPDLRKDKGWVGQLLEWHLGATAGSRPQQDFEHLGIELKSIPISYTGKPLETTFVCVAPLTGVHGLTWEQSHVRNKLSKVLWIPVQGEREIPLAERCVGYPLLWSPSPEEEAQLKADWEELMELIVLGKVAQITAKHGEVLQLRPKAANGRALTEAYGANGRPIKTLPRGFYLRTQFTAQILQRYYA.

Belongs to the MutH family.

It is found in the cytoplasm. Its function is as follows. Sequence-specific endonuclease that cleaves unmethylated GATC sequences. It is involved in DNA mismatch repair. This is DNA mismatch repair protein MutH from Vibrio cholerae serotype O1 (strain ATCC 39541 / Classical Ogawa 395 / O395).